A 188-amino-acid chain; its full sequence is Inosine triphosphate pyrophosphatase (188 aa).

Residue 12–17 participates in ITP binding; sequence TGNANK. Position 40 (glutamate 40) interacts with Mg(2+). ITP is bound by residues lysine 52, 68 to 69, lysine 85, 144 to 147, lysine 165, and 170 to 171; these read DT, FGWD, and HR.

Belongs to the HAM1 NTPase family. In terms of assembly, homodimer. Mg(2+) is required as a cofactor. Requires Mn(2+) as cofactor.

It is found in the cytoplasm. The protein localises to the nucleus. It carries out the reaction ITP + H2O = IMP + diphosphate + H(+). It catalyses the reaction dITP + H2O = dIMP + diphosphate + H(+). The catalysed reaction is XTP + H2O = XMP + diphosphate + H(+). Pyrophosphatase that hydrolyzes non-canonical purine nucleotides such as inosine triphosphate (ITP), deoxyinosine triphosphate (dITP) or xanthosine 5'-triphosphate (XTP) to their respective monophosphate derivatives. The enzyme does not distinguish between the deoxy- and ribose forms. Probably excludes non-canonical purines from RNA and DNA precursor pools, thus preventing their incorporation into RNA and DNA and avoiding chromosomal lesions. This Podospora anserina (strain S / ATCC MYA-4624 / DSM 980 / FGSC 10383) (Pleurage anserina) protein is Inosine triphosphate pyrophosphatase.